Consider the following 161-residue polypeptide: Probable ribosome biogenesis protein RLP24 (161 aa).

It belongs to the eukaryotic ribosomal protein eL24 family. As to quaternary structure, associated with nucleolar and cytoplasmic pre-60S particles. At the end of biogenesis it dissociates from cytoplasmic pre-60S particles and is likely to be exchanged for its ribosomal homolog, RPL24.

The protein localises to the nucleus. It localises to the nucleolus. Functionally, involved in the biogenesis of the 60S ribosomal subunit. Ensures the docking of GTPBP4/NOG1 to pre-60S particles. This is Probable ribosome biogenesis protein RLP24 (rsl24d1) from Danio rerio (Zebrafish).